The chain runs to 294 residues: MSVSEQDPNRAYRETQSQIYKLQETLLNSARTKNKQEEGQESNTHSFPEQYMHYQNGRNSAYDLPNVSSQSVLAFTEKHYPNKLKNLGTLYYNRFKEGSFDEDSTSYSDRHSFPYNLYDNTLPPPFLPAIGIQNINNIATLKITYEDIQASFNNIESPRKRNNEIWGCDIYSDDSDPILVLRHCGFKIGAPSGGSFHKLRRTPVNVTNQDNVTGNLPLLEGTPFDLEVELLFLPTLQKYPSVKRFDITSREWGSEATVIHDGLSYGIYSIVIKQRLDRDKPHEPNGYIKNLKWT.

Ser-2 bears the N-acetylserine mark.

Belongs to the RXT3 family. In terms of assembly, component of the RPD3C(L) complex composed of at least ASH1, CTI6, DEP1, PHO23, RPD3, RXT2, RXT3, SAP30, SDS3, SIN3, UME1 and UME6.

Its subcellular location is the nucleus. Functionally, component of the RPD3C(L) histone deacetylase complex (HDAC) responsible for the deacetylation of lysine residues on the N-terminal part of the core histones (H2A, H2B, H3 and H4). Histone deacetylation gives a tag for epigenetic repression and plays an important role in transcriptional regulation, cell cycle progression and developmental events. The polypeptide is Transcriptional regulatory protein RXT3 (RXT3) (Saccharomyces cerevisiae (strain ATCC 204508 / S288c) (Baker's yeast)).